The chain runs to 416 residues: LysM domain-containing GPI-anchored protein 1 (416 aa).

The first 27 residues, Met1–Ala27, serve as a signal peptide directing secretion. 4 disulfides stabilise this stretch: Cys34–Cys100, Cys40–Cys163, Cys98–Cys161, and Cys100–Cys163. Asn37 carries N-linked (GlcNAc...) asparagine glycosylation. The 48-residue stretch at Thr110–Ile157 folds into the LysM 1 domain. N-linked (GlcNAc...) asparagine glycosylation is present at Asn165. In terms of domain architecture, LysM 2 spans Leu176–Val219. 2 disulfides stabilise this stretch: Cys224–Cys256 and Cys251–Cys279. Asn241 carries N-linked (GlcNAc...) asparagine glycosylation. 3 N-linked (GlcNAc...) asparagine glycosylation sites follow: Asn288, Asn299, and Asn310. Positions Asp356–Leu376 are disordered. Ala391 carries GPI-anchor amidated alanine lipidation. Residues Ser392–Ser416 constitute a propeptide, removed in mature form.

As to quaternary structure, interacts with peptidoglycans.

It localises to the cell membrane. It is found in the secreted. Functionally, required as a cell surface receptor for peptidoglycan (PGN) elicitor signaling leading to innate immunity. Plays an essential role in detecting PGNs and restricting bacterial growth (of Pseudomonas syringae pv. tomato DC3000 for example). The polypeptide is LysM domain-containing GPI-anchored protein 1 (LYM1) (Arabidopsis thaliana (Mouse-ear cress)).